Consider the following 399-residue polypeptide: Pre-mycofactocin synthase (399 aa).

In terms of domain architecture, FMN hydroxy acid dehydrogenase spans 4–386; the sequence is ARDIWFETVA…VPEDILVPEG (383 aa). FMN contacts are provided by serine 111 and glutamine 131. Tyrosine 133 is a binding site for a 2-oxocarboxylate. Residue threonine 159 coordinates FMN. Arginine 168 serves as a coordination point for a 2-oxocarboxylate. Lysine 257 contacts FMN. Histidine 281 (proton acceptor) is an active-site residue. FMN contacts are provided by residues 312–316 and 335–336; these read DGGIR and GR.

The protein belongs to the FMN-dependent alpha-hydroxy acid dehydrogenase family. It depends on FMN as a cofactor.

It carries out the reaction 3-amino-5-[(4-hydroxyphenyl)methyl]-4,4-dimethyl-2-pyrrolidin-2-one + O2 + H2O = pre-mycofactocin + H2O2 + NH4(+). Functionally, involved in the biosynthesis of the enzyme cofactor mycofactocin (MFT). Catalyzes the oxidative deamination of AHDP (3-amino-5-[(4-hydroxyphenyl)methyl]-4,4-dimethyl-2-pyrrolidin-2-one), forming an alpha-keto amide moiety on the resulting molecule, which is called pre-mycofactocin (PMFT). This reaction occurs via a 5-[(4-hydroxyphenyl)methyl]-3-imino-4,4-dimethylpyrrolidin-2-one intermediate, which converts to PMFT. The alpha-keto amide moiety is the redox-active center for the redox activity of mycofactocin. Is required for the in vivo ethanol assimilation in M.smegmatis. The sequence is that of Pre-mycofactocin synthase from Mycolicibacterium smegmatis (strain ATCC 700084 / mc(2)155) (Mycobacterium smegmatis).